Consider the following 170-residue polypeptide: uncharacterized protein (170 aa).

This is an uncharacterized protein from Arabidopsis thaliana (Mouse-ear cress).